The following is a 115-amino-acid chain: Replication initiation control protein YabA (115 aa).

His90, Cys92, Cys106, and Cys109 together coordinate Zn(2+).

It belongs to the YabA family. In terms of assembly, homotetramer. Interacts with both DnaA and DnaN, acting as a bridge between these two proteins. The cofactor is Zn(2+).

The protein localises to the cytoplasm. The protein resides in the nucleoid. Its function is as follows. Involved in control of chromosome replication initiation. Inhibits the cooperative binding of DnaA to the oriC region, thus negatively regulating initiation of chromosome replication. Inhibits the ability of DnaA-ATP to form a helix on DNA; does not disassemble preformed DnaA-DNA helices. Decreases the residence time of DnaA on the chromosome at its binding sites (oriC, replication forks and promoter-binding sites). Tethers DnaA to the replication machinery via the DNA polymerase beta sliding clamp subunit (dnaN). Associates with oriC and other DnaA targets on the chromosome in a DnaA-dependent manner. The protein is Replication initiation control protein YabA of Staphylococcus aureus (strain JH1).